We begin with the raw amino-acid sequence, 66 residues long: Toxin Cll1 (66 aa).

One can recognise an LCN-type CS-alpha/beta domain in the interval 1 to 66 (KEGYLVNKST…TYPLPNKSCS (66 aa)). Intrachain disulfides connect cysteine 12-cysteine 65, cysteine 16-cysteine 41, cysteine 25-cysteine 46, and cysteine 29-cysteine 48.

This sequence belongs to the long (4 C-C) scorpion toxin superfamily. Sodium channel inhibitor family. Beta subfamily. As to expression, expressed by the venom gland.

It localises to the secreted. In terms of biological role, beta toxin that binds site-4 of sodium channels (Nav) and reduces peak current (observed on Nav1.1/SCN1A, Nav1.2/SCN2A, Nav1.3/SCN3A, Nav1.4/SCN5A, Nav1.5/SCN4A, and Nav1.6/SCN8A (IC(50)=44.9 nM)), shifts the voltage of activation toward more negative potentials (observed on Nav1.6, Nav1.1 (weak), Nav1.2 (weak), and Nav1.7 (weak)), and induces resurgent currents at negative voltages following brief and strong depolarizations (observed on Nav1.6, Nav1.1 (weak), Nav1.2 (weak), and Nav1.4 (weak)). This toxin is only active on crustaceans. The chain is Toxin Cll1 from Centruroides limpidus (Mexican scorpion).